Consider the following 103-residue polypeptide: UPF0091 protein PH0944 (103 aa).

Belongs to the UPF0091 family.

This is UPF0091 protein PH0944 from Pyrococcus horikoshii (strain ATCC 700860 / DSM 12428 / JCM 9974 / NBRC 100139 / OT-3).